The following is a 484-amino-acid chain: tRNA sulfurtransferase (484 aa).

The 105-residue stretch at 63 to 167 (REMIERLTCT…LDRLFVIHRQ (105 aa)) folds into the THUMP domain. ATP is bound by residues 185-186 (LM), Lys-267, Gly-289, and Gln-298. Cys-346 and Cys-457 form a disulfide bridge. Residues 405–483 (VLPGQIVIDI…GHTNVRVYRP (79 aa)) form the Rhodanese domain. Cys-457 (cysteine persulfide intermediate) is an active-site residue.

The protein belongs to the ThiI family.

Its subcellular location is the cytoplasm. The enzyme catalyses [ThiI sulfur-carrier protein]-S-sulfanyl-L-cysteine + a uridine in tRNA + 2 reduced [2Fe-2S]-[ferredoxin] + ATP + H(+) = [ThiI sulfur-carrier protein]-L-cysteine + a 4-thiouridine in tRNA + 2 oxidized [2Fe-2S]-[ferredoxin] + AMP + diphosphate. It catalyses the reaction [ThiS sulfur-carrier protein]-C-terminal Gly-Gly-AMP + S-sulfanyl-L-cysteinyl-[cysteine desulfurase] + AH2 = [ThiS sulfur-carrier protein]-C-terminal-Gly-aminoethanethioate + L-cysteinyl-[cysteine desulfurase] + A + AMP + 2 H(+). The protein operates within cofactor biosynthesis; thiamine diphosphate biosynthesis. Its function is as follows. Catalyzes the ATP-dependent transfer of a sulfur to tRNA to produce 4-thiouridine in position 8 of tRNAs, which functions as a near-UV photosensor. Also catalyzes the transfer of sulfur to the sulfur carrier protein ThiS, forming ThiS-thiocarboxylate. This is a step in the synthesis of thiazole, in the thiamine biosynthesis pathway. The sulfur is donated as persulfide by IscS. This is tRNA sulfurtransferase from Pseudomonas paraeruginosa (strain DSM 24068 / PA7) (Pseudomonas aeruginosa (strain PA7)).